The following is a 154-amino-acid chain: Deoxyuridine 5'-triphosphate nucleotidohydrolase (154 aa).

Substrate contacts are provided by residues 74–76 (RSG), Asn87, 91–93 (TID), and Lys101.

The protein belongs to the dUTPase family. It depends on Mg(2+) as a cofactor.

The enzyme catalyses dUTP + H2O = dUMP + diphosphate + H(+). It participates in pyrimidine metabolism; dUMP biosynthesis; dUMP from dCTP (dUTP route): step 2/2. This enzyme is involved in nucleotide metabolism: it produces dUMP, the immediate precursor of thymidine nucleotides and it decreases the intracellular concentration of dUTP so that uracil cannot be incorporated into DNA. The protein is Deoxyuridine 5'-triphosphate nucleotidohydrolase of Cytophaga hutchinsonii (strain ATCC 33406 / DSM 1761 / CIP 103989 / NBRC 15051 / NCIMB 9469 / D465).